Reading from the N-terminus, the 877-residue chain is Ewing's tumor-associated antigen 1 homolog (877 aa).

Positions methionine 1–proline 82 are disordered. The segment covering alanine 56–glutamine 65 has biased composition (basic residues). Lysine 87 participates in a covalent cross-link: Glycyl lysine isopeptide (Lys-Gly) (interchain with G-Cter in SUMO2). An ATR-activation domain (AAD) motif is present at residues isoleucine 107–serine 113. 2 coiled-coil regions span residues lysine 185–glutamine 213 and alanine 306–glutamate 335. Residues lysine 416 and lysine 444 each participate in a glycyl lysine isopeptide (Lys-Gly) (interchain with G-Cter in SUMO2) cross-link. Residues proline 450–phenylalanine 479 are disordered. The segment covering arginine 454–lysine 476 has biased composition (basic and acidic residues). Serine 467 is modified (phosphoserine). A Glycyl lysine isopeptide (Lys-Gly) (interchain with G-Cter in SUMO2) cross-link involves residue lysine 510. Residues glycine 607–glutamate 622 carry the RBM1 motif motif. 2 disordered regions span residues glutamine 626–histidine 664 and alanine 818–proline 877. Over residues serine 637 to serine 662 the composition is skewed to low complexity. Residues alanine 818–proline 833 are compositionally biased toward polar residues. Basic and acidic residues predominate over residues glutamate 840–valine 859. An RBM2 motif motif is present at residues arginine 843 to alanine 865. Residues threonine 868–proline 877 are compositionally biased toward polar residues.

Interacts (via RBM1 motif) with RPA1. Interacts (via RBM2 motif) with RPA2. Interacts (via the ATR-activation domain motif) with ATR. Post-translationally, phosphorylated by ATR.

It localises to the nucleus. Its function is as follows. Replication stress response protein that accumulates at DNA damage sites and promotes replication fork progression and integrity. Recruited to stalled replication forks via interaction with the RPA complex and directly stimulates ATR kinase activity independently of TOPBP1. Probably only regulates a subset of ATR targets. This chain is Ewing's tumor-associated antigen 1 homolog, found in Mus musculus (Mouse).